Consider the following 3258-residue polypeptide: Protein unc-80 homolog (3258 aa).

A disordered region spans residues 152-173 (VENQGSPGQPCQSSSNDEEENN). The span at 155–166 (QGSPGQPCQSSS) shows a compositional bias: low complexity. S257 is subject to Phosphoserine. 9 disordered regions span residues 291-316 (RGNSFDGSLSSQTSQERGPSHSRASL), 449-468 (RKEDRERKGSIPFHHTGKRR), 522-560 (RRGSSDAATEMESLSARHSHSHHTLVSDLPDPSNSHGEN), 697-717 (KKSENKENETLEKRPSEGAFQ), 732-784 (PAVS…TPVS), 963-1019 (PGKK…EQMQ), 1034-1076 (KSQS…ISLR), 1404-1447 (EDSK…MSNA), and 1817-1836 (AVSAEDEEHTTEHTPNHHVP). Residues 295 to 307 (FDGSLSSQTSQER) show a composition bias toward polar residues. A Phosphoserine modification is found at S525. Basic and acidic residues predominate over residues 698–712 (KSENKENETLEKRPS). Gly residues predominate over residues 732 to 767 (PAVSGAGDGGGEEGGGGDGGGGGGDGGGGGGGGGGP). 2 stretches are compositionally biased toward basic and acidic residues: residues 769–780 (EKNDKNQEKDES) and 965–974 (KKVEENEQES). The segment covering 1035 to 1052 (SQSAASDTSSQSEQDTSE) has biased composition (low complexity). Positions 1066 to 1076 (ARSRSRRISLR) are enriched in basic residues. Residues 1417-1429 (LKSDAGVEEKKEG) show a composition bias toward basic and acidic residues. The next 4 membrane-spanning stretches (helical) occupy residues 2268 to 2288 (PFVLQLFASVAPLLEFPDAAN), 2398 to 2418 (IAATAALATSLQALLYSVEVL), 2785 to 2805 (GLAESTSQAAYLALKVILVCF), and 2831 to 2851 (LALWDFLDFIVRTRIPIFVLL). The span at 2942-2964 (NTGTGTVWEQDSEPSQQASQDTL) shows a compositional bias: polar residues. Residues 2942-2982 (NTGTGTVWEQDSEPSQQASQDTLSRTDEEDEENDSISMPSV) form a disordered region. At S3042 the chain carries Phosphoserine. The disordered stretch occupies residues 3051–3213 (NLLVQQPLGR…DDFTGLETSS (163 aa)). Over residues 3059-3068 (GRKRGLRQLR) the composition is skewed to basic residues. Residues 3088 to 3100 (RLSTTRRSIQPKT) are compositionally biased toward polar residues. The span at 3117–3129 (PEPAAAPTDALPA) shows a compositional bias: low complexity. Residues 3175 to 3186 (PTEEGEKEEDTE) show a composition bias toward acidic residues.

It belongs to the unc-80 family. As to quaternary structure, NALCN complex consists of NALCN and auxiliary subunits, UNC79, UNC80 and NACL1. These auxiliary subunits are essential for the NALCN complex function. Interacts (via N-terminus half) with NALCN; this interaction facilitates NALCN surface localization. Interacts with UNC79. UNC80 bridges NALCN to UNC79. Phosphorylated on tyrosine residues. As to expression, moderately expressed in fetal brain, spinal cord, skeletal muscle, thymus, spleen, fetal liver, small intestine, colon, kidney and uterus. Highly expressed in adrenal gland, prostate and testis, as well as in brain and cerebellum.

The protein localises to the cell membrane. Functionally, auxiliary subunit of the NALCN sodium channel complex, a voltage-gated ion channel responsible for the resting Na(+) permeability that controls neuronal excitability. Activated by neuropeptides substance P, neurotensin, and extracellular Ca(2+) that regulates neuronal excitability by controlling the sizes of NALCN-dependent sodium-leak current. UNC80 is essential for NALCN sensitivity to extracellular Ca(2+). The polypeptide is Protein unc-80 homolog (Homo sapiens (Human)).